Reading from the N-terminus, the 573-residue chain is Sulfate adenylyltransferase (573 aa).

Residues 1–169 (MANSPHGGVL…LEAVNRLQHY (169 aa)) are N-terminal. A catalytic region spans residues 170 to 394 (DFVELRYTPS…LRESHPPRSQ (225 aa)). Gln-197 is a sulfate binding site. ATP contacts are provided by residues 197-200 (QTRN) and 291-294 (GRDH). Residues Thr-198, Arg-199, and Asn-200 contribute to the active site. Position 199 (Arg-199) interacts with sulfate. Ala-295 contributes to the sulfate binding site. Met-333 serves as a coordination point for ATP. Residues 395–573 (QGFTIFLTGY…LESQGLLDRF (179 aa)) form an allosteric regulation domain; adenylyl-sulfate kinase-like region. 3'-phosphoadenylyl sulfate is bound by residues 434 to 437 (ETVR), Arg-451, 477 to 478 (IA), and Arg-515.

It in the N-terminal section; belongs to the sulfate adenylyltransferase family. This sequence in the C-terminal section; belongs to the APS kinase family. Homohexamer. Dimer of trimers.

It is found in the cytoplasm. The enzyme catalyses sulfate + ATP + H(+) = adenosine 5'-phosphosulfate + diphosphate. It participates in sulfur metabolism; hydrogen sulfide biosynthesis; sulfite from sulfate: step 1/3. With respect to regulation, allosterically inhibited by 3'-phosphoadenosine 5'-phosphosulfate (PAPS). Functionally, catalyzes the first intracellular reaction of sulfate assimilation, forming adenosine-5'-phosphosulfate (APS) from inorganic sulfate and ATP. Plays an important role in sulfate activation as a component of the biosynthesis pathway of sulfur-containing amino acids. This Chaetomium globosum (strain ATCC 6205 / CBS 148.51 / DSM 1962 / NBRC 6347 / NRRL 1970) (Soil fungus) protein is Sulfate adenylyltransferase.